Consider the following 344-residue polypeptide: Cyanuric acid amidohydrolase (344 aa).

Residues 1–91 form an RU A region; that stretch reads MTVVDIVKRT…ASAFVGTDRP (91 aa). Residues Arg-51 and 71–72 each bind substrate; that span reads SG. Residues 97–232 form an RU B region; it reads ALVAAVGRTA…CHILVLGNSP (136 aa). The active site involves Lys-146. Substrate contacts are provided by residues Arg-178 and 215 to 216; that span reads SS. Ser-215 functions as the Nucleophile in the catalytic mechanism. Residues 238–344 are RU C; the sequence is LRAVHGVMRD…PVTVVYRVAS (107 aa). Glu-276 serves as a coordination point for Mg(2+). Substrate contacts are provided by residues Arg-303 and 322 to 323; that span reads SG. Ala-325, Gln-328, Gly-329, Pro-330, and Gly-333 together coordinate Mg(2+).

The protein belongs to the cyclic amide hydrolase (CyAH) family. As to quaternary structure, homotetramer.

The catalysed reaction is cyanurate + H2O = 1-carboxybiuret + H(+). The protein operates within xenobiotic degradation; atrazine degradation; biuret from cyanurate: step 1/1. Inhibited by barbituric acid. Responsible for the hydrolysis of cyanuric acid, an intermediate formed during catabolism of s-triazine based compounds in herbicides such as atrazine and polymers such as melamine. Catalyzes the hydrolytic opening of the s-triazine ring of cyanuric acid (2,4,6-trihydroxy-s-triazine) to yield carbon dioxide and carboxybiuret, which spontaneously decarboxylates to biuret. This chain is Cyanuric acid amidohydrolase, found in Pseudonocardia dioxanivorans (strain ATCC 55486 / DSM 44775 / JCM 13855 / CB1190).